A 203-amino-acid chain; its full sequence is E3 ubiquitin-protein ligase RNF152 (203 aa).

Residues 12–55 (CQICFNYYSPRRRPKLLDCKHTCCSVCLQQMRTSQKDVRCPWCR) form an RING-type zinc finger. Residues 106–165 (ISKERALLPGDMGCRLLPGSQQKSVTVVTIPAEQQPLQGGAPQEAVEEEQDRRGVVKSST) are necessary for interaction with RRAGA. The helical transmembrane segment at 167 to 187 (SGVCTVILVACVLVFLLGIVL) threads the bilayer.

Belongs to the RNF152 family. In terms of assembly, interacts with RRAGA (inactive GDP-bound form); stimulated by amino acid starvation. Interacts with SEC16A. In terms of processing, ubiquitinated. Autoubiquitinated in vitro, leading to its degradation by the proteasome. In terms of tissue distribution, widely expressed.

It is found in the lysosome membrane. The enzyme catalyses S-ubiquitinyl-[E2 ubiquitin-conjugating enzyme]-L-cysteine + [acceptor protein]-L-lysine = [E2 ubiquitin-conjugating enzyme]-L-cysteine + N(6)-ubiquitinyl-[acceptor protein]-L-lysine.. Its pathway is protein modification; protein ubiquitination. E3 ubiquitin-protein ligase that acts as a negative regulator of mTORC1 signaling by mediating ubiquitination of RagA/RRAGA and RHEB. Catalyzes 'Lys-63'-linked polyubiquitination of RagA/RRAGA in response to amino acid starvation, thereby regulating mTORC1 signaling. Also mediates monoubiquitination of RHEB, promoting its association with the TSC-TBC complex and subsequent inhibition. Also mediates 'Lys-48'-linked polyubiquitination of target proteins and their subsequent targeting to the proteasome for degradation. Induces apoptosis when overexpressed. This is E3 ubiquitin-protein ligase RNF152 from Homo sapiens (Human).